The sequence spans 644 residues: DNA gyrase subunit B (644 aa).

The Toprim domain maps to 429-543 (CEIFLVEGDS…AGYVYIAQPP (115 aa)). The Mg(2+) site is built by Glu435, Asp508, and Asp510.

The protein belongs to the type II topoisomerase GyrB family. As to quaternary structure, heterotetramer, composed of two GyrA and two GyrB chains. In the heterotetramer, GyrA contains the active site tyrosine that forms a transient covalent intermediate with DNA, while GyrB binds cofactors and catalyzes ATP hydrolysis. The cofactor is Mg(2+). It depends on Mn(2+) as a cofactor. Ca(2+) is required as a cofactor.

It is found in the cytoplasm. The enzyme catalyses ATP-dependent breakage, passage and rejoining of double-stranded DNA.. Functionally, a type II topoisomerase that negatively supercoils closed circular double-stranded (ds) DNA in an ATP-dependent manner to modulate DNA topology and maintain chromosomes in an underwound state. Negative supercoiling favors strand separation, and DNA replication, transcription, recombination and repair, all of which involve strand separation. Also able to catalyze the interconversion of other topological isomers of dsDNA rings, including catenanes and knotted rings. Type II topoisomerases break and join 2 DNA strands simultaneously in an ATP-dependent manner. The sequence is that of DNA gyrase subunit B from Staphylococcus aureus (strain MRSA252).